Consider the following 1044-residue polypeptide: Diacylglycerol lipase-alpha (1044 aa).

Over Met-1–Ala-22 the chain is Cytoplasmic. A helical membrane pass occupies residues Ile-23 to Leu-43. Residues Val-44–Arg-60 lie on the Extracellular side of the membrane. Residues Gly-61–Met-81 traverse the membrane as a helical segment. Residues Arg-82–Arg-101 are Cytoplasmic-facing. The chain crosses the membrane as a helical span at residues Leu-102–Tyr-122. Topologically, residues Tyr-123 to Leu-136 are extracellular. N-linked (GlcNAc...) asparagine glycosylation occurs at Asn-133. Residues Gly-137 to Phe-157 traverse the membrane as a helical segment. Over Asp-158–Arg-1044 the chain is Cytoplasmic. Active-site charge relay system residues include Ser-472 and Asp-524. Residues Ser-728, Ser-730, Ser-733, Ser-744, Ser-784, Ser-786, Ser-808, Ser-810, Ser-835, Ser-849, and Ser-954 each carry the phosphoserine modification. Residues Leu-848–Leu-897 form a disordered region. A disordered region spans residues Gln-1013–Arg-1044. The residue at position 1025 (Thr-1025) is a Phosphothreonine.

Belongs to the AB hydrolase superfamily. Lipase family. In terms of assembly, interacts (via C-terminal) with CAMK2A; leading to the phosphorylation and inhibition of DAGLA enzymatic activity. Interacts (via PPXXF motif) with HOMER1 and HOMER2; this interaction is required for DAGLA membrane localization. The cofactor is Ca(2+). In terms of processing, phosphorylated at Ser-784 and Ser-810 by CAMK2A; phosphorylation by CAMK2A inhibits diacylglycerol lipase activity. In terms of tissue distribution, highly expressed by principal cells in the hippocampus. In embryonic brains, it is present in axonal tracts, while in adults it localizes to dendritic fields, correlating with the developmental change in requirement for 2-AG synthesis from the pre- to the postsynaptic compartment. Concentrated in heads of dendritic spines throughout the hippocampal formation. Highly compartmentalized into a wide perisynaptic annulus around the postsynaptic density of axospinous contacts but not intrasynaptically (at protein level).

The protein localises to the cell membrane. It is found in the cell projection. The protein resides in the dendritic spine membrane. Its subcellular location is the postsynaptic density membrane. It localises to the early endosome membrane. The catalysed reaction is a 1,2-diacyl-sn-glycerol + H2O = a 2-acylglycerol + a fatty acid + H(+). It carries out the reaction 1-octadecanoyl-2-(5Z,8Z,11Z,14Z-eicosatetraenoyl)-sn-glycerol + H2O = 2-(5Z,8Z,11Z,14Z-eicosatetraenoyl)-glycerol + octadecanoate + H(+). It catalyses the reaction 1,2-di-(9Z-octadecenoyl)-sn-glycerol + H2O = 2-(9Z-octadecenoyl)-glycerol + (9Z)-octadecenoate + H(+). The enzyme catalyses 1-(9Z-octadecenoyl)-2-(5Z,8Z,11Z,14Z-eicosatetraenoyl)-sn-glycerol + H2O = 2-(5Z,8Z,11Z,14Z-eicosatetraenoyl)-glycerol + (9Z)-octadecenoate + H(+). The catalysed reaction is 1-(9Z-octadecenoyl)-2-octadecanoyl-sn-glycerol + H2O = 2-octadecanoylglycerol + (9Z)-octadecenoate + H(+). It carries out the reaction 1-(9Z-octadecenoyl)-2-(9Z,12Z-octadecadienoyl)-sn-glycerol + H2O = 2-(9Z,12Z-octadecadienoyl)-glycerol + (9Z)-octadecenoate + H(+). It catalyses the reaction 1-(9Z-octadecenoyl)-2-O-(5Z,8Z,11Z,14Z-eicosatetraenyl)-sn-glycerol + H2O = 2-O-(5Z,8Z,11Z,14Z)-eicosatetraenylglycerol + (9Z)-octadecenoate + H(+). Its activity is regulated as follows. Inhibited by 1,2,3-triazole urea covalent inhibitor KT172, DH376 and DO34. Inhibited by p-hydroxy-mercuri-benzoate and HgCl(2), but not to PMSF. Also inhibited by RHC80267. Diacylglycerol lipase activity is inhibited by the phosphorylation of Ser-784 and Ser-810 by CAMK2A. Functionally, serine hydrolase that hydrolyzes arachidonic acid-esterified diacylglycerols (DAGs) to produce the principal endocannabinoid (eCB), 2-arachidonoylglycerol (2-AG). Preferentially hydrolyzes sn-1 fatty acids from diacylglycerols (DAG) that contain arachidonic acid (AA) esterified at the sn-2 position to biosynthesize 2-AG. Has negligible activity against other lipids including monoacylglycerols and phospholipids. Plays a key role in regulating 2-AG signaling in the central nervous system (CNS). Controls the activity of 2-AG as a retrograde messenger at neuronal synapses. Supports axonal growth during development and adult neurogenesis. Plays a role for eCB signaling in the physiological regulation of anxiety and depressive behaviors. Also regulates neuroinflammatory responses in the brain, in particular, LPS-induced microglial activation. The chain is Diacylglycerol lipase-alpha (Dagla) from Mus musculus (Mouse).